Reading from the N-terminus, the 506-residue chain is 2,3-bisphosphoglycerate-independent phosphoglycerate mutase (506 aa).

D9 and S59 together coordinate Mn(2+). The Phosphoserine intermediate role is filled by S59. Substrate is bound by residues H120, 149-150 (RD), R181, R187, 254-257 (RADR), and K327. Residues D394, H398, D435, H436, and H452 each contribute to the Mn(2+) site.

The protein belongs to the BPG-independent phosphoglycerate mutase family. It depends on Mn(2+) as a cofactor.

It carries out the reaction (2R)-2-phosphoglycerate = (2R)-3-phosphoglycerate. The protein operates within carbohydrate degradation; glycolysis; pyruvate from D-glyceraldehyde 3-phosphate: step 3/5. In terms of biological role, catalyzes the interconversion of 2-phosphoglycerate and 3-phosphoglycerate. The polypeptide is 2,3-bisphosphoglycerate-independent phosphoglycerate mutase (Natronomonas pharaonis (strain ATCC 35678 / DSM 2160 / CIP 103997 / JCM 8858 / NBRC 14720 / NCIMB 2260 / Gabara) (Halobacterium pharaonis)).